The primary structure comprises 223 residues: Ribose-5-phosphate isomerase A (223 aa).

Residues 26–29 (TGST), 82–85 (DGAD), and 95–98 (KGGG) contribute to the substrate site. The active-site Proton acceptor is the glutamate 104. Residue lysine 122 coordinates substrate.

It belongs to the ribose 5-phosphate isomerase family. In terms of assembly, homodimer.

The enzyme catalyses aldehydo-D-ribose 5-phosphate = D-ribulose 5-phosphate. The protein operates within carbohydrate degradation; pentose phosphate pathway; D-ribose 5-phosphate from D-ribulose 5-phosphate (non-oxidative stage): step 1/1. Functionally, catalyzes the reversible conversion of ribose-5-phosphate to ribulose 5-phosphate. This chain is Ribose-5-phosphate isomerase A, found in Streptococcus agalactiae serotype Ia (strain ATCC 27591 / A909 / CDC SS700).